The primary structure comprises 466 residues: FBD-associated F-box protein At5g22730 (466 aa).

In terms of domain architecture, F-box spans 27-80 (EDLISKLPDSLITQILLYLPIKDIVRTSSLSSRWKSLWLLIPRLDLDSEEFQDY). Residues 385-436 (DEPIIFSSVPRCLVSSLESVEIKKFNGRPAKMEVARYFLENSGVLQKLVLHL) form the FBD domain.

The sequence is that of FBD-associated F-box protein At5g22730 from Arabidopsis thaliana (Mouse-ear cress).